A 428-amino-acid chain; its full sequence is Dihydroorotase (428 aa).

Zn(2+)-binding residues include H59 and H61. Residues 61–63 and N93 each bind substrate; that span reads HLR. Positions 151, 178, and 231 each coordinate Zn(2+). N277 contacts substrate. Position 304 (D304) interacts with Zn(2+). The active site involves D304. Substrate is bound by residues H308 and 322–323; that span reads FG.

The protein belongs to the metallo-dependent hydrolases superfamily. DHOase family. Class I DHOase subfamily. Zn(2+) is required as a cofactor.

The catalysed reaction is (S)-dihydroorotate + H2O = N-carbamoyl-L-aspartate + H(+). It functions in the pathway pyrimidine metabolism; UMP biosynthesis via de novo pathway; (S)-dihydroorotate from bicarbonate: step 3/3. Its function is as follows. Catalyzes the reversible cyclization of carbamoyl aspartate to dihydroorotate. This is Dihydroorotase from Halalkalibacterium halodurans (strain ATCC BAA-125 / DSM 18197 / FERM 7344 / JCM 9153 / C-125) (Bacillus halodurans).